Consider the following 483-residue polypeptide: Acetyl-coenzyme A carboxylase carboxyl transferase subunit beta, chloroplastic (483 aa).

One can recognise a CoA carboxyltransferase N-terminal domain in the interval 219 to 483; sequence LWVQCENCYG…LHTFFPLNQN (265 aa). Positions 223, 226, 242, and 245 each coordinate Zn(2+). The segment at 223–245 adopts a C4-type zinc-finger fold; it reads CENCYGLNYKKFFKSKMNLCEQC.

The protein belongs to the AccD/PCCB family. Acetyl-CoA carboxylase is a heterohexamer composed of biotin carboxyl carrier protein, biotin carboxylase and 2 subunits each of ACCase subunit alpha and ACCase plastid-coded subunit beta (accD). Requires Zn(2+) as cofactor.

It is found in the plastid. The protein localises to the chloroplast stroma. The enzyme catalyses N(6)-carboxybiotinyl-L-lysyl-[protein] + acetyl-CoA = N(6)-biotinyl-L-lysyl-[protein] + malonyl-CoA. It participates in lipid metabolism; malonyl-CoA biosynthesis; malonyl-CoA from acetyl-CoA: step 1/1. Functionally, component of the acetyl coenzyme A carboxylase (ACC) complex. Biotin carboxylase (BC) catalyzes the carboxylation of biotin on its carrier protein (BCCP) and then the CO(2) group is transferred by the transcarboxylase to acetyl-CoA to form malonyl-CoA. This is Acetyl-coenzyme A carboxylase carboxyl transferase subunit beta, chloroplastic from Guizotia abyssinica (Niger).